The sequence spans 483 residues: Elastin-binding protein EbpS (483 aa).

A compositionally biased stretch (basic and acidic residues) spans 1–40 (MSNNFKDDFEKNRQSIDTNSHQDHTEEVEKDQSELEHQDT). The tract at residues 1-311 (MSNNFKDDFE…HHDRDKERKK (311 aa)) is disordered. Positions 14–34 (QSIDTNSHQDHTEEVEKDQSE) are elastin-binding. The segment covering 64 to 85 (TNHNKQVHNESQTSEDNVQNEA) has biased composition (polar residues). 3 stretches are compositionally biased toward basic and acidic residues: residues 103–118 (EPSH…EEYY), 126–160 (DKSH…KSEA), and 180–199 (SKDK…SKDH). Over residues 204 to 222 (KGAAIGAGTAGVAGAMAAS) the composition is skewed to low complexity. Residues 230–243 (DAQNKSNSGKANNS) show a composition bias toward polar residues. A compositionally biased stretch (basic and acidic residues) spans 244-256 (TEDKASQDKSKEH). Residues 275-294 (GAASKSASAASKPHASNNAS) are compositionally biased toward low complexity. The segment covering 296 to 311 (NHDEHDHHDRDKERKK) has biased composition (basic and acidic residues). The chain crosses the membrane as a helical span at residues 317-337 (VLLPLIAAVLIIGALAIFGGM). A disordered region spans residues 348–437 (ENKIANTNKN…QRQGGGQRHT (90 aa)). Positions 358-395 (NADESKDKDTSKDASKDKSKSTDSDKSKEDQDKATKDE) are enriched in basic and acidic residues. Residues 400 to 428 (QNNANQANNQAQNNQNQQQANQNQQQQQQ) are compositionally biased toward low complexity. The region spanning 434–482 (QRHTVNGQENLYRIAIQYYGSGSPENVEKIRRANGLSGNNIRNGQQIVI) is the LysM domain.

It localises to the cell membrane. Promotes binding of soluble elastin peptides and tropoelastin to S.aureus cells although it is not able to promote bacterial adherence to immobilized elastin and, therefore, is not a microbial surface component recognizing adhesive matrix molecule (MSCRAMM). This chain is Elastin-binding protein EbpS (ebpS), found in Staphylococcus aureus (strain bovine RF122 / ET3-1).